The chain runs to 68 residues: Large ribosomal subunit protein bL31 (68 aa).

This sequence belongs to the bacterial ribosomal protein bL31 family. Type A subfamily. As to quaternary structure, part of the 50S ribosomal subunit.

Its function is as follows. Binds the 23S rRNA. The polypeptide is Large ribosomal subunit protein bL31 (Helicobacter hepaticus (strain ATCC 51449 / 3B1)).